A 206-amino-acid chain; its full sequence is NADH-quinone oxidoreductase subunit C (206 aa).

It belongs to the complex I 30 kDa subunit family. In terms of assembly, NDH-1 is composed of 14 different subunits. Subunits NuoB, C, D, E, F, and G constitute the peripheral sector of the complex.

It is found in the cell inner membrane. It catalyses the reaction a quinone + NADH + 5 H(+)(in) = a quinol + NAD(+) + 4 H(+)(out). Functionally, NDH-1 shuttles electrons from NADH, via FMN and iron-sulfur (Fe-S) centers, to quinones in the respiratory chain. The immediate electron acceptor for the enzyme in this species is believed to be ubiquinone. Couples the redox reaction to proton translocation (for every two electrons transferred, four hydrogen ions are translocated across the cytoplasmic membrane), and thus conserves the redox energy in a proton gradient. This chain is NADH-quinone oxidoreductase subunit C, found in Nitrosomonas europaea (strain ATCC 19718 / CIP 103999 / KCTC 2705 / NBRC 14298).